Here is a 294-residue protein sequence, read N- to C-terminus: Holothin acyltransferase (294 aa).

The N-acetyltransferase domain occupies 17–146 (WTSKPASLEE…SRLVGIHNQQ (130 aa)).

It carries out the reaction marinoloyl-CoA C + holothin = thiomarinol C + CoA. It catalyses the reaction pseudomonoyl-CoA C + holothin = pseudomonic acid C--holothin + CoA. It functions in the pathway antibiotic biosynthesis. Functionally, acyltransferase that catalyzes the formation of pseudomonic acid C-holothin (PAC-holothin), a thiomarinol analog, from pseudomonoyl-CoA C (PAC-CoA) and holothin. Accepts linear CoA substrates of different lengths, including propionyl-, hexanoyl-, octanoyl-, oleoyl- and dodecanoyl-CoA, readily converting all into the corresponding acyl-holothin adducts. In vivo, is probably involved in the biosynthesis of thiomarinol, a naturally occurring double-headed antibiotic. The protein is Holothin acyltransferase of Pseudoalteromonas sp. (strain SANK 73390).